We begin with the raw amino-acid sequence, 383 residues long: Probable tRNA sulfurtransferase (383 aa).

In terms of domain architecture, THUMP spans 58–158 (NEIIHILKMI…ENKSYVWFDK (101 aa)). ATP contacts are provided by residues 176 to 177 (LL), 201 to 202 (TF), Arg-259, Gly-281, and Gln-290.

Belongs to the ThiI family.

It is found in the cytoplasm. It carries out the reaction [ThiI sulfur-carrier protein]-S-sulfanyl-L-cysteine + a uridine in tRNA + 2 reduced [2Fe-2S]-[ferredoxin] + ATP + H(+) = [ThiI sulfur-carrier protein]-L-cysteine + a 4-thiouridine in tRNA + 2 oxidized [2Fe-2S]-[ferredoxin] + AMP + diphosphate. The catalysed reaction is [ThiS sulfur-carrier protein]-C-terminal Gly-Gly-AMP + S-sulfanyl-L-cysteinyl-[cysteine desulfurase] + AH2 = [ThiS sulfur-carrier protein]-C-terminal-Gly-aminoethanethioate + L-cysteinyl-[cysteine desulfurase] + A + AMP + 2 H(+). It participates in cofactor biosynthesis; thiamine diphosphate biosynthesis. In terms of biological role, catalyzes the ATP-dependent transfer of a sulfur to tRNA to produce 4-thiouridine in position 8 of tRNAs, which functions as a near-UV photosensor. Also catalyzes the transfer of sulfur to the sulfur carrier protein ThiS, forming ThiS-thiocarboxylate. This is a step in the synthesis of thiazole, in the thiamine biosynthesis pathway. The sulfur is donated as persulfide by IscS. The sequence is that of Probable tRNA sulfurtransferase from Malacoplasma penetrans (strain HF-2) (Mycoplasma penetrans).